The sequence spans 504 residues: Putative BTB/POZ domain-containing protein R842 (504 aa).

The 71-residue stretch at 21 to 91 (SDVKLILKDN…FYGFKSPSVT (71 aa)) folds into the BTB domain.

This sequence belongs to the mimivirus BTB/WD family.

This is Putative BTB/POZ domain-containing protein R842 from Acanthamoeba polyphaga (Amoeba).